The sequence spans 248 residues: 23S rRNA (guanosine-2'-O-)-methyltransferase RlmB (248 aa).

Positions 200, 220, and 229 each coordinate S-adenosyl-L-methionine.

Belongs to the class IV-like SAM-binding methyltransferase superfamily. RNA methyltransferase TrmH family. RlmB subfamily.

The protein resides in the cytoplasm. It carries out the reaction guanosine(2251) in 23S rRNA + S-adenosyl-L-methionine = 2'-O-methylguanosine(2251) in 23S rRNA + S-adenosyl-L-homocysteine + H(+). In terms of biological role, specifically methylates the ribose of guanosine 2251 in 23S rRNA. The protein is 23S rRNA (guanosine-2'-O-)-methyltransferase RlmB of Acinetobacter baylyi (strain ATCC 33305 / BD413 / ADP1).